Here is a 360-residue protein sequence, read N- to C-terminus: MVGRKIIHVDMDAFYASVEQRDRPHLKGVPVIVGGPPHARGVVATCSYEARKYGIHSAMPSRRAFQLCPRAVFVRPRFEVYRAVSAQIMELFLEVTPLVEPLSLDEAYLDVTENNLQMTSATHIAQYILAEIKRRTGLTASAGVSNSKLVAKIASGHQKPNGLTVLPPDAVLPFLSGLKIGDLHGVGKVTEQTLQKHGFNTVADIQQSPIAELRGLLGRDRGTELYTMAHGEDERMVRPHRERKSIGSESTFEEDTEDIDTIFETLKREALSVVKTLNQKELVCRTVTIKWKTEDFQSRSKRYTFLEETADEDTLLRVTTKLFNEIEFSGPIRLIGMSVSHLEAPPLSKQLTWQDIDSYL.

Residues 6-187 (IIHVDMDAFY…LKIGDLHGVG (182 aa)) form the UmuC domain. Mg(2+) contacts are provided by aspartate 10 and aspartate 105. Residue glutamate 106 is part of the active site.

It belongs to the DNA polymerase type-Y family. In terms of assembly, monomer. The cofactor is Mg(2+).

Its subcellular location is the cytoplasm. It catalyses the reaction DNA(n) + a 2'-deoxyribonucleoside 5'-triphosphate = DNA(n+1) + diphosphate. Poorly processive, error-prone DNA polymerase involved in untargeted mutagenesis. Copies undamaged DNA at stalled replication forks, which arise in vivo from mismatched or misaligned primer ends. These misaligned primers can be extended by PolIV. Exhibits no 3'-5' exonuclease (proofreading) activity. May be involved in translesional synthesis, in conjunction with the beta clamp from PolIII. The protein is DNA polymerase IV of Exiguobacterium sibiricum (strain DSM 17290 / CCUG 55495 / CIP 109462 / JCM 13490 / 255-15).